The chain runs to 266 residues: MRPRMKYSNSKISPAKFSSTAGEALVPPCKIRRSQQKTKEFCHVYCMRLRSGLTIRKETSYFRKEPTKRYSLKSGTKHEENFSAYPRDSRKRSLLGSIQAFAASVDTLSIQGTSLLTQSPASLSTYNDQSVSFVLENGCYVINVDDSGKDQEQDQVLLRYYESPCPASQSGDGVDGKKLMVNMSPIKDTDIWLHANDKDYSVELQRGDVSPPEQAFFVLHKKSSDFVSFECKNLPGTYIGVKDNQLALVEEKDESCNNIMFKLSKI.

The homeodomain-like HTH domain stretch occupies residues 1–67 (MRPRMKYSNS…ETSYFRKEPT (67 aa)). A propeptide spanning residues 1-101 (MRPRMKYSNS…RSLLGSIQAF (101 aa)) is cleaved from the precursor. The interval 66-108 (PTKRYSLKSGTKHEENFSAYPRDSRKRSLLGSIQAFAASVDTL) is interaction with RELA.

Belongs to the IL-1 family. Highly divergent. In terms of assembly, (Microbial infection) Interacts (in reduced form) with H.polygyrus ARI; the interaction abolishes the interaction with its primary receptor IL1RL1. Forms a 1:1:1 heterotrimeric complex with its primary high-affinity receptor IL1RL1 and the coreceptor IL1RAP. Interacts with cargo receptor TMED10; the interaction mediates the translocation from the cytoplasm into the ERGIC (endoplasmic reticulum-Golgi intermediate compartment) and thereby secretion. Post-translationally, the full-length protein can be released from cells and is able to signal via the IL1RL1/ST2 receptor. However, proteolytic processing by CELA1, CSTG/cathepsin G and ELANE/neutrophil elastase produces C-terminal peptides that are more active than the unprocessed full-length protein. May also be proteolytically processed by calpains. Proteolytic cleavage mediated by apoptotic caspases including CASP3 and CASP7 results in IL33 inactivation. In vitro proteolytic cleavage by CASP1 was reported but could not be confirmed in vivo suggesting that IL33 is probably not a direct substrate for that caspase.

It localises to the nucleus. Its subcellular location is the chromosome. The protein localises to the cytoplasm. It is found in the cytoplasmic vesicle. The protein resides in the secretory vesicle. It localises to the secreted. Cytokine that binds to and signals through the IL1RL1/ST2 receptor which in turn activates NF-kappa-B and MAPK signaling pathways in target cells. Involved in the maturation of Th2 cells inducing the secretion of T-helper type 2-associated cytokines. Also involved in activation of mast cells, basophils, eosinophils and natural killer cells. Acts as an enhancer of polarization of alternatively activated macrophages. Acts as a chemoattractant for Th2 cells, and may function as an 'alarmin', that amplifies immune responses during tissue injury. Induces rapid UCP2-dependent mitochondrial rewiring that attenuates the generation of reactive oxygen species and preserves the integrity of Krebs cycle required for persistent production of itaconate and subsequent GATA3-dependent differentiation of inflammation-resolving alternatively activated macrophages. Its function is as follows. In quiescent endothelia the uncleaved form is constitutively and abundantly expressed, and acts as a chromatin-associated nuclear factor with transcriptional repressor properties, it may sequester nuclear NF-kappaB/RELA, lowering expression of its targets. This form is rapidely lost upon angiogenic or pro-inflammatory activation. This Mus musculus (Mouse) protein is Interleukin-33.